The sequence spans 396 residues: MQSTTLYLKTAAFLGGCSLFAATALAATSTATRPQLSNADARAYTIASYMASFGTIGSLTTDNWDPTGGVGAVSGFRANYAVAADGSAQYKTVQAAIDAAVADGGVARKYISVKAGTYNELVCVPESAPPITLYSLDANANNTVIVYNNANPTPASGAKTNPCMGTSSNATVGTVRSATAMVRASNFNARNLTFKNSYVEGTFADNNQSAVALAVRGDKAILENVSVIGNQDTLYLGATNNTMVIRAYFKNSFIQGDTDFIFGAGTAVFHGCTIQYTAARLGARATSYVFAPSTAPDNPHGFLAINSTFNATGNASNNSTHLGRAWDQGVSGTSAYINGSSPNGQVVIRDSSLGAHIRLADPWGPSTAGRPYCSSKCAYSANRFFEYNNTGAGSGN.

An N-terminal signal peptide occupies residues 1 to 26 (MQSTTLYLKTAAFLGGCSLFAATALA). Thr-174 contacts substrate. Asp-232 acts as the Proton donor in catalysis. The active-site Nucleophile is the Asp-259. Substrate-binding residues include Arg-324 and Trp-326.

The protein belongs to the pectinesterase family.

It localises to the secreted. It carries out the reaction [(1-&gt;4)-alpha-D-galacturonosyl methyl ester](n) + n H2O = [(1-&gt;4)-alpha-D-galacturonosyl](n) + n methanol + n H(+). Its pathway is glycan metabolism; pectin degradation; 2-dehydro-3-deoxy-D-gluconate from pectin: step 1/5. Functionally, involved in maceration and soft-rotting of plant tissue. The chain is Pectinesterase (pme) from Ralstonia solanacearum (Pseudomonas solanacearum).